We begin with the raw amino-acid sequence, 125 residues long: Protein sigma-1-small (125 aa).

The protein belongs to the orthoreovirus sigma-1s protein family.

This chain is Protein sigma-1-small (S1), found in Mammalia (T2J).